A 548-amino-acid chain; its full sequence is Chaperonin GroEL (548 aa).

Residues 30–33 (TLGP), Lys-51, 87–91 (DGTTT), Gly-415, 479–481 (NAA), and Asp-495 each bind ATP.

This sequence belongs to the chaperonin (HSP60) family. Forms a cylinder of 14 subunits composed of two heptameric rings stacked back-to-back. Interacts with the co-chaperonin GroES.

It is found in the cytoplasm. It catalyses the reaction ATP + H2O + a folded polypeptide = ADP + phosphate + an unfolded polypeptide.. Its function is as follows. Together with its co-chaperonin GroES, plays an essential role in assisting protein folding. The GroEL-GroES system forms a nano-cage that allows encapsulation of the non-native substrate proteins and provides a physical environment optimized to promote and accelerate protein folding. The polypeptide is Chaperonin GroEL (Oleidesulfovibrio alaskensis (strain ATCC BAA-1058 / DSM 17464 / G20) (Desulfovibrio alaskensis)).